Here is a 424-residue protein sequence, read N- to C-terminus: Glutamyl-tRNA reductase (424 aa).

Residues 51 to 54, Ser-99, 104 to 106, and Gln-110 each bind substrate; these read TCNR and EDQ. Cys-52 acts as the Nucleophile in catalysis. 179-184 lines the NADP(+) pocket; it reads GTGEMG.

The protein belongs to the glutamyl-tRNA reductase family. Homodimer.

It catalyses the reaction (S)-4-amino-5-oxopentanoate + tRNA(Glu) + NADP(+) = L-glutamyl-tRNA(Glu) + NADPH + H(+). Its pathway is porphyrin-containing compound metabolism; protoporphyrin-IX biosynthesis; 5-aminolevulinate from L-glutamyl-tRNA(Glu): step 1/2. Functionally, catalyzes the NADPH-dependent reduction of glutamyl-tRNA(Glu) to glutamate 1-semialdehyde (GSA). This Methanospirillum hungatei JF-1 (strain ATCC 27890 / DSM 864 / NBRC 100397 / JF-1) protein is Glutamyl-tRNA reductase.